The sequence spans 461 residues: Kynurenine 3-monooxygenase (461 aa).

2 helical membrane passes run 395–415 (TIMN…VTFS) and 432–452 (ILSR…AAGI).

It belongs to the aromatic-ring hydroxylase family. KMO subfamily. It depends on FAD as a cofactor.

Its subcellular location is the mitochondrion. The protein localises to the membrane. The enzyme catalyses L-kynurenine + NADPH + O2 + H(+) = 3-hydroxy-L-kynurenine + NADP(+) + H2O. Its pathway is cofactor biosynthesis; NAD(+) biosynthesis; quinolinate from L-kynurenine: step 1/3. In terms of biological role, catalyzes the hydroxylation of L-kynurenine (L-Kyn) to form 3-hydroxy-L-kynurenine (L-3OHKyn). Required for synthesis of quinolinic acid. The sequence is that of Kynurenine 3-monooxygenase from Caenorhabditis elegans.